A 216-amino-acid polypeptide reads, in one-letter code: ATP-dependent Clp protease proteolytic subunit (216 aa).

The Nucleophile role is filled by Ser-101. His-126 is a catalytic residue.

It belongs to the peptidase S14 family. As to quaternary structure, component of the chloroplastic Clp protease core complex.

The protein localises to the plastid. It localises to the chloroplast stroma. It carries out the reaction Hydrolysis of proteins to small peptides in the presence of ATP and magnesium. alpha-casein is the usual test substrate. In the absence of ATP, only oligopeptides shorter than five residues are hydrolyzed (such as succinyl-Leu-Tyr-|-NHMec, and Leu-Tyr-Leu-|-Tyr-Trp, in which cleavage of the -Tyr-|-Leu- and -Tyr-|-Trp bonds also occurs).. In terms of biological role, cleaves peptides in various proteins in a process that requires ATP hydrolysis. Has a chymotrypsin-like activity. Plays a major role in the degradation of misfolded proteins. In Zea mays (Maize), this protein is ATP-dependent Clp protease proteolytic subunit.